The sequence spans 359 residues: DNA polymerase IV (359 aa).

A UmuC domain is found at I4–G185. The Mg(2+) site is built by D8 and D103. The active site involves E104.

This sequence belongs to the DNA polymerase type-Y family. In terms of assembly, monomer. Mg(2+) serves as cofactor.

It localises to the cytoplasm. It carries out the reaction DNA(n) + a 2'-deoxyribonucleoside 5'-triphosphate = DNA(n+1) + diphosphate. In terms of biological role, poorly processive, error-prone DNA polymerase involved in untargeted mutagenesis. Copies undamaged DNA at stalled replication forks, which arise in vivo from mismatched or misaligned primer ends. These misaligned primers can be extended by PolIV. Exhibits no 3'-5' exonuclease (proofreading) activity. May be involved in translesional synthesis, in conjunction with the beta clamp from PolIII. In Shewanella frigidimarina (strain NCIMB 400), this protein is DNA polymerase IV.